The following is a 497-amino-acid chain: Probable pyruvate kinase, cytosolic isozyme (497 aa).

R37 contacts substrate. The K(+) site is built by N39, S41, D71, and T72. 39–42 (NFSH) contributes to the ATP binding site. Positions 78 and 163 each coordinate ATP. Residue K227 coordinates substrate. E229 lines the Mg(2+) pocket. Residues G252, D253, and T285 each coordinate substrate. Residue D253 participates in Mg(2+) binding.

This sequence belongs to the pyruvate kinase family. As to quaternary structure, homotetramer. The cofactor is Mg(2+). It depends on K(+) as a cofactor.

It is found in the cytoplasm. The protein localises to the cytosol. The enzyme catalyses pyruvate + ATP = phosphoenolpyruvate + ADP + H(+). It functions in the pathway carbohydrate degradation; glycolysis; pyruvate from D-glyceraldehyde 3-phosphate: step 5/5. Functionally, key regulatory enzyme of the glycolytic pathway that catalyzes the final step of glycolysis, converting ADP and phosphoenolpyruvate (PEP) to ATP and pyruvate by essentially irreversible transphosphorylation. The polypeptide is Probable pyruvate kinase, cytosolic isozyme (Arabidopsis thaliana (Mouse-ear cress)).